The chain runs to 131 residues: D-ribose pyranase (131 aa).

His20 acts as the Proton donor in catalysis. Substrate contacts are provided by residues Asp28, His98, and 120–122 (YAN).

It belongs to the RbsD / FucU family. RbsD subfamily. In terms of assembly, homodecamer.

The protein localises to the cytoplasm. It carries out the reaction beta-D-ribopyranose = beta-D-ribofuranose. It functions in the pathway carbohydrate metabolism; D-ribose degradation; D-ribose 5-phosphate from beta-D-ribopyranose: step 1/2. In terms of biological role, catalyzes the interconversion of beta-pyran and beta-furan forms of D-ribose. The polypeptide is D-ribose pyranase (Clostridium perfringens (strain SM101 / Type A)).